Consider the following 142-residue polypeptide: Cell division protein SepF (142 aa).

This sequence belongs to the SepF family. In terms of assembly, homodimer. Interacts with FtsZ.

Its subcellular location is the cytoplasm. Its function is as follows. Cell division protein that is part of the divisome complex and is recruited early to the Z-ring. Probably stimulates Z-ring formation, perhaps through the cross-linking of FtsZ protofilaments. Its function overlaps with FtsA. The sequence is that of Cell division protein SepF from Syntrophomonas wolfei subsp. wolfei (strain DSM 2245B / Goettingen).